We begin with the raw amino-acid sequence, 125 residues long: Fluoride-specific ion channel FluC (125 aa).

4 consecutive transmembrane segments (helical) span residues 4–24 (LMLV…TVTA), 32–52 (AFPW…GLLV), 67–87 (LLLA…SLDV), and 100–120 (LAYV…GLWL). Na(+)-binding residues include G75 and T78.

The protein belongs to the fluoride channel Fluc/FEX (TC 1.A.43) family.

It localises to the cell inner membrane. It catalyses the reaction fluoride(in) = fluoride(out). With respect to regulation, na(+) is not transported, but it plays an essential structural role and its presence is essential for fluoride channel function. Functionally, fluoride-specific ion channel. Important for reducing fluoride concentration in the cell, thus reducing its toxicity. This Chelativorans sp. (strain BNC1) protein is Fluoride-specific ion channel FluC.